We begin with the raw amino-acid sequence, 880 residues long: EP-cadherin (880 aa).

Positions 1–28 are cleaved as a signal peptide; that stretch reads MGSTRLRNASVWLCGLLCLLQVVPSINA. A propeptide spanning residues 29–155 is cleaved from the precursor; the sequence is DVSGCKPGFS…THTGLKRKKR (127 aa). Asparagine 61 carries an N-linked (GlcNAc...) asparagine glycan. 5 Cadherin domains span residues 156 to 263, 264 to 376, 377 to 487, 488 to 593, and 594 to 704; these read DWVI…RPKF, TQDV…APIF, DPKT…APFF, VPAV…DNGP, and VPSP…GFDL. Over 156–703 the chain is Extracellular; sequence DWVIPPIKVS…CQEKLVGGFD (548 aa). Residues threonine 343, threonine 382, and threonine 400 are each glycosylated (O-linked (GalNAc...) threonine). A glycan (N-linked (GlcNAc...) asparagine) is linked at asparagine 425. O-linked (GalNAc...) threonine glycans are attached at residues threonine 428, threonine 469, threonine 471, threonine 473, and threonine 475. N-linked (GlcNAc...) asparagine glycosylation is present at asparagine 558. O-linked (GalNAc...) threonine glycans are attached at residues threonine 562, threonine 576, threonine 578, and threonine 580. Disulfide bonds link cysteine 603–cysteine 687 and cysteine 685–cysteine 694. A glycan (N-linked (GlcNAc...) asparagine) is linked at asparagine 681. The chain crosses the membrane as a helical span at residues 704-728; the sequence is LPIILVILGSVLALLILFLLLLLFL. Over 729–880 the chain is Cytoplasmic; it reads KRKKVVKEPL…DMYGGDDDEE (152 aa). A disordered region spans residues 790 to 826; sequence PAPHYRPRPSNPDEIGNFIDENLDAADNDPTAPPYDS.

In terms of assembly, interacts with CTNNB1.

It is found in the cell membrane. In terms of biological role, cadherins are calcium-dependent cell adhesion proteins. They preferentially interact with themselves in a homophilic manner in connecting cells; cadherins may thus contribute to the sorting of heterogeneous cell types. The chain is EP-cadherin from Xenopus laevis (African clawed frog).